A 312-amino-acid chain; its full sequence is MAIYLDFENHIKEIQNEIELALIRGDEDAKEILEKRLEKEVKSIYSNLTDFQKLQLARHPDRPYAMDYIDLILKDKYEVFGDRHYNDDKAIVCFIGKIDNVPVVVIGEEKGRGTKNKLLRNFGMPNPCGYRKALKMAKFAEKFNLPILMLVDTAGAYPGIGAEERGQSEAIAKNLQEFASLKVPTISVIIGEGGSGGALAIAVADKLAMMEYSIFSVISPEGCAAILWDDPSKTEVAIKAMKITPRDLKEAGLIDDIILEPSKGAHRDKFSAANTIKEYFLDALRTIQQDPHFLDNRYQKLMSLGSFVEGMN.

Residues 36–286 (RLEKEVKSIY…KEYFLDALRT (251 aa)) enclose the CoA carboxyltransferase C-terminal domain.

It belongs to the AccA family. As to quaternary structure, acetyl-CoA carboxylase is a heterohexamer composed of biotin carboxyl carrier protein (AccB), biotin carboxylase (AccC) and two subunits each of ACCase subunit alpha (AccA) and ACCase subunit beta (AccD).

The protein localises to the cytoplasm. It catalyses the reaction N(6)-carboxybiotinyl-L-lysyl-[protein] + acetyl-CoA = N(6)-biotinyl-L-lysyl-[protein] + malonyl-CoA. It participates in lipid metabolism; malonyl-CoA biosynthesis; malonyl-CoA from acetyl-CoA: step 1/1. Functionally, component of the acetyl coenzyme A carboxylase (ACC) complex. First, biotin carboxylase catalyzes the carboxylation of biotin on its carrier protein (BCCP) and then the CO(2) group is transferred by the carboxyltransferase to acetyl-CoA to form malonyl-CoA. The sequence is that of Acetyl-coenzyme A carboxylase carboxyl transferase subunit alpha from Helicobacter pylori (strain P12).